The following is a 495-amino-acid chain: ATP-dependent RNA helicase dbp3 (495 aa).

Residues 1 to 14 are compositionally biased toward basic and acidic residues; that stretch reads MAKRELQDKGSTEH. A disordered region spans residues 1–49; it reads MAKRELQDKGSTEHRAKKKSRNEKHTKKAEDSQASAQSSETQYTDPKEP. Over residues 15–27 the composition is skewed to basic residues; it reads RAKKKSRNEKHTK. The short motif at 97 to 105 is the Q motif element; it reads SFTSPTAIQ. Positions 109 to 284 constitute a Helicase ATP-binding domain; the sequence is WPFLFSGRDV…ATFMTSPVTV (176 aa). Residue 122-129 participates in ATP binding; sequence AETGSGKT. Residues 231–234 carry the DEAD box motif; that stretch reads DEAD. The 150-residue stretch at 315–464 folds into the Helicase C-terminal domain; sequence RLVQLLNKYQ…DVPEDLLKFG (150 aa).

The protein belongs to the DEAD box helicase family. DDX5/DBP2 subfamily.

It localises to the nucleus. It is found in the nucleolus. It carries out the reaction ATP + H2O = ADP + phosphate + H(+). Its function is as follows. ATP-dependent RNA helicase required for 60S ribosomal subunit synthesis. Involved in efficient pre-rRNA processing, predominantly at site A3, which is necessary for the normal formation of 25S and 5.8S rRNAs. The polypeptide is ATP-dependent RNA helicase dbp3 (dbp3) (Aspergillus niger (strain ATCC MYA-4892 / CBS 513.88 / FGSC A1513)).